We begin with the raw amino-acid sequence, 373 residues long: tRNA-specific 2-thiouridylase MnmA (373 aa).

ATP is bound by residues 12-19 and methionine 38; that span reads GMSGGVDS. The interval 98-100 is interaction with target base in tRNA; that stretch reads NPD. Cysteine 103 serves as the catalytic Nucleophile. Cysteine 103 and cysteine 200 form a disulfide bridge. Residue glycine 127 coordinates ATP. Residues 150-152 are interaction with tRNA; that stretch reads KDQ. Cysteine 200 serves as the catalytic Cysteine persulfide intermediate. An interaction with tRNA region spans residues 312-313; sequence RY.

The protein belongs to the MnmA/TRMU family.

Its subcellular location is the cytoplasm. The enzyme catalyses S-sulfanyl-L-cysteinyl-[protein] + uridine(34) in tRNA + AH2 + ATP = 2-thiouridine(34) in tRNA + L-cysteinyl-[protein] + A + AMP + diphosphate + H(+). Catalyzes the 2-thiolation of uridine at the wobble position (U34) of tRNA, leading to the formation of s(2)U34. This Streptococcus mutans serotype c (strain ATCC 700610 / UA159) protein is tRNA-specific 2-thiouridylase MnmA.